The following is a 178-amino-acid chain: uncharacterized protein (178 aa).

The first 19 residues, 1 to 19, serve as a signal peptide directing secretion; it reads MINRKILLTSLLLIFTVLS. Residues R52, E60, and R94 contribute to the active site.

The protein belongs to the thermonuclease family.

This is an uncharacterized protein from Haemophilus influenzae (strain ATCC 51907 / DSM 11121 / KW20 / Rd).